Here is a 567-residue protein sequence, read N- to C-terminus: Urease subunit alpha (567 aa).

In terms of domain architecture, Urease spans 129-567; sequence GGIDTHIHFI…LPMAQRYFLF (439 aa). Ni(2+)-binding residues include His-134, His-136, and Lys-217. Lys-217 is subject to N6-carboxylysine. Position 219 (His-219) interacts with substrate. The Ni(2+) site is built by His-246 and His-272. The Proton donor role is filled by His-320. Position 360 (Asp-360) interacts with Ni(2+).

It belongs to the metallo-dependent hydrolases superfamily. Urease alpha subunit family. As to quaternary structure, probable heterotrimer of UreA (gamma), UreB (beta) and UreC (alpha) subunits. Three heterotrimers associate to form the active enzyme. The trimeric urease interacts with an accessory complex composed of UreD, UreF and UreG, which is required for the assembly of the nickel containing metallocenter of UreC. The UreE protein may also play a direct role in nickel transfer to the urease apoprotein. The cofactor is Ni cation. Post-translationally, carboxylation allows a single lysine to coordinate two nickel ions.

The protein localises to the cytoplasm. The catalysed reaction is urea + 2 H2O + H(+) = hydrogencarbonate + 2 NH4(+). It functions in the pathway nitrogen metabolism; urea degradation; CO(2) and NH(3) from urea (urease route): step 1/1. This Proteus mirabilis (strain HI4320) protein is Urease subunit alpha.